The chain runs to 566 residues: Amino acid transporter 6-1 (566 aa).

Transmembrane regions (helical) follow at residues 65-85 (YVLL…FYGW), 137-157 (MTFA…DWLG), 158-178 (PLWT…FLAF), 187-207 (YPAL…TLCI), 216-236 (GLII…PLVL), 250-270 (VSIG…LLFM), 334-354 (FFSI…WATS), 367-387 (DVVS…ILLG), 392-412 (VVGI…TYVF), 423-443 (LSAC…YVYV), and 455-475 (LIGI…PLYE). A glycan (N-linked (GlcNAc...) asparagine) is linked at asparagine 476. The helical transmembrane segment at 489–509 (IQIAMTALLCVQYVWIFILGF) threads the bilayer.

This sequence belongs to the SLC43A transporter (TC 2.A.1.44) family.

Its subcellular location is the cell membrane. It carries out the reaction L-lysine(in) = L-lysine(out). It catalyses the reaction L-arginine(in) = L-arginine(out). The catalysed reaction is L-methionine(in) = L-methionine(out). The enzyme catalyses L-leucine(in) = L-leucine(out). Its function is as follows. Cationic and neutral amino acid transporter. Transports lysine with high affinity. Can transport arginine, methionine and leucine. Does not require inorganic ions, such as sodium, chloride, potassium, calcium or magnesium, for transport activity. The sequence is that of Amino acid transporter 6-1 from Toxoplasma gondii (strain ATCC 50611 / Me49).